A 327-amino-acid polypeptide reads, in one-letter code: Phenylalanine--tRNA ligase alpha subunit (327 aa).

Glutamate 252 is a Mg(2+) binding site.

It belongs to the class-II aminoacyl-tRNA synthetase family. Phe-tRNA synthetase alpha subunit type 1 subfamily. In terms of assembly, tetramer of two alpha and two beta subunits. It depends on Mg(2+) as a cofactor.

It is found in the cytoplasm. It carries out the reaction tRNA(Phe) + L-phenylalanine + ATP = L-phenylalanyl-tRNA(Phe) + AMP + diphosphate + H(+). This chain is Phenylalanine--tRNA ligase alpha subunit, found in Vibrio vulnificus (strain CMCP6).